Reading from the N-terminus, the 907-residue chain is Glutamate receptor 1 (907 aa).

Positions 1-18 are cleaved as a signal peptide; it reads MPYIFAFFCTGFLGAVVG. Over 19 to 536 the chain is Extracellular; sequence ANFPNNIQIG…GVFSFLDPLA (518 aa). N-linked (GlcNAc...) asparagine glycans are attached at residues asparagine 63, asparagine 249, asparagine 257, asparagine 363, asparagine 401, and asparagine 406. Cysteines 75 and 323 form a disulfide. L-glutamate-binding residues include proline 492, threonine 494, and arginine 499. A helical transmembrane segment spans residues 537–557; the sequence is YEIWMCIVFAYIGVSVVLFLV. The Cytoplasmic segment spans residues 558–584; the sequence is SRFSPYEWHSEEFEEGRDQTTSDQSNE. Positions 585 to 600 form an intramembrane region, helical; Pore-forming; that stretch reads FGIFNSLWFSLGAFMQ. Residues 601–603 lie within the membrane without spanning it; that stretch reads QGC. The S-palmitoyl cysteine moiety is linked to residue cysteine 603. Residues 604–609 are Cytoplasmic-facing; sequence DISPRS. The helical transmembrane segment at 610-630 threads the bilayer; it reads LSGRIVGGVWWFFTLIIISSY. The Extracellular portion of the chain corresponds to 631 to 805; that stretch reads TANLAAFLTV…DKTSALSLSN (175 aa). Serine 645 is modified (phosphoserine). L-glutamate is bound by residues serine 668 and threonine 669. Residue serine 710 is modified to Phosphoserine; by PKC. Position 719 (glutamate 719) interacts with L-glutamate. Cysteine 732 and cysteine 787 form a disulfide bridge. The helical transmembrane segment at 806 to 826 threads the bilayer; it reads VAGVFYILIGGLGLAMLVALI. Topologically, residues 827 to 907 are cytoplasmic; it reads EFCYKSRSES…SGMPLGATGL (81 aa). Cysteine 829 carries S-palmitoyl cysteine lipidation. Serine 849 bears the Phosphoserine; by PKC, PKA and CAMK2 mark. The tract at residues 857–881 is disordered; the sequence is STLPRNSGAGASGGGGSGENGRVVS. Serine 863 is subject to Phosphoserine; by PKC, PKA and PKG/PRKG2. A compositionally biased stretch (gly residues) spans 866-875; the sequence is GASGGGGSGE. Residues 904-907 carry the PDZ-binding motif; the sequence is ATGL.

Belongs to the glutamate-gated ion channel (TC 1.A.10.1) family. GRIA1 subfamily. In terms of assembly, homotetramer or heterotetramer of pore-forming glutamate receptor subunits; heteromeric assembly can be the result of both receptor subtype and flip-flop forms and according the composition, one partner can be dominant with respect to the fast desensitizing current component, whereas the other can determine the steady-state component. Tetramers may be formed by the dimerization of dimers. Found in a complex with GRIA2, GRIA3, GRIA4, CNIH2, CNIH3, CACNG2, CACNG3, CACNG4, CACNG5, CACNG7 and CACNG8. Interacts with HIP1 and RASGRF2. Interacts with SYNDIG1 and GRIA2. Interacts with DLG1 (via C-terminus). Interacts with LRFN1. Interacts with PRKG2. Interacts with CNIH2 and CACNG2. Interacts with CACNG5; this interaction modulates the gating. Interacts (via C-terminus) with PDLIM4 (via LIM domain); this interaction as well as the interaction of PDLIM4 with alpha-actinin is required for their colocalization in early endosomes. Interacts with SNX27 (via PDZ domain); the interaction is required for recycling to the plasma membrane when endocytosed and prevent degradation in lysosomes. Interacts (via PDZ-binding motif) with SHANK3 (via PDZ domain). Interacts with CACNG3; associates GRIA1 with the adapter protein complex 4 (AP-4) to target GRIA1 to the somatodendritic compartment of neurons. Interacts with CACNG2; this interaction mediates traffick to the plasma membrane and modulation of desensitization. Interaction with CNIH2 and CNIH3; this interaction promotes expression at the plasma membrane and extensively modulates their gating properties by slowing deactivation and desensitization kinetics. Found in a complex with GRIA2, GRIA3, GRIA4, DLG4, CACNG8 and CNIH2. Phosphorylated at Ser-645. Phosphorylated at Ser-710 by PKC. Phosphorylated at Ser-849 by PKC, PKA and CAMK2. Phosphorylated at Ser-863 by PKC, PKA and PRKG2. Phosphorylation of Ser-863 is reduced by induction of long-term depression and increased by induction of long-term potentiation. Post-translationally, palmitoylated. Depalmitoylated by CPT1C and upon L-glutamate stimulation. ZDHHC3/GODZ specifically palmitoylates Cys-603, which leads to Golgi retention and decreased cell surface expression. In contrast, Cys-829 palmitoylation does not affect cell surface expression but regulates stimulation-dependent endocytosis. Detected in cerebellum (at protein level).

The protein resides in the cell membrane. Its subcellular location is the endoplasmic reticulum membrane. The protein localises to the postsynaptic cell membrane. It is found in the postsynaptic density membrane. It localises to the cell projection. The protein resides in the dendrite. Its subcellular location is the dendritic spine. The protein localises to the early endosome membrane. It is found in the recycling endosome membrane. It localises to the presynapse. The protein resides in the synapse. It catalyses the reaction Ca(2+)(in) = Ca(2+)(out). The catalysed reaction is Na(+)(in) = Na(+)(out). It carries out the reaction Mg(2+)(in) = Mg(2+)(out). The enzyme catalyses Li(+)(in) = Li(+)(out). It catalyses the reaction K(+)(in) = K(+)(out). The catalysed reaction is Sr(2+)(in) = Sr(2+)(out). Glutamate-gated receptor activity inhibited by DNQX (6,7-dinitroquinoxaline-2,3-dione). Ionotropic glutamate receptor that functions as a ligand-gated cation channel, gated by L-glutamate and glutamatergic agonists such as alpha-amino-3-hydroxy-5-methyl-4-isoxazolepropionic acid (AMPA), quisqualic acid, and kainic acid. L-glutamate acts as an excitatory neurotransmitter at many synapses in the central nervous system. Binding of the excitatory neurotransmitter L-glutamate induces a conformation change, leading to the opening of the cation channel, and thereby converts the chemical signal to an electrical impulse upon entry of monovalent and divalent cations such as sodium and calcium. The receptor then desensitizes rapidly and enters in a transient inactive state, characterized by the presence of bound agonist. In the presence of CACNG2 or CACNG4 or CACNG7 or CACNG8, shows resensitization which is characterized by a delayed accumulation of current flux upon continued application of L-glutamate. Resensitization is blocked by CNIH2 through interaction with CACNG8 in the CACNG8-containing AMPA receptors complex. Calcium (Ca(2+)) permeability depends on subunits composition and, heteromeric channels containing edited GRIA2 subunit are calcium-impermeable. Also permeable to other divalents cations such as strontium(2+) and magnesium(2+) and monovalent cations such as potassium(1+) and lithium(1+). This chain is Glutamate receptor 1, found in Rattus norvegicus (Rat).